Consider the following 254-residue polypeptide: Putative epimerase LsrE (254 aa).

A helical transmembrane segment spans residues 14 to 34; it reads VALLASYPLSVGILAGQWIAL. Positions 50, 52, and 81 each coordinate a divalent metal cation. Asp-52 acts as the Proton acceptor in catalysis. Residues His-81, 166 to 169, 199 to 201, and 221 to 222 contribute to the substrate site; these read GYGS, DGS, and GS. Asp-199 serves as a coordination point for a divalent metal cation. Asp-199 serves as the catalytic Proton donor.

The protein belongs to the ribulose-phosphate 3-epimerase family. Requires a divalent metal cation as cofactor.

It localises to the cell membrane. The protein is Putative epimerase LsrE (lsrE) of Salmonella typhi.